A 569-amino-acid chain; its full sequence is Santalene synthase (569 aa).

R284, D321, D325, and R460 together coordinate (2E)-geranyl diphosphate. Mg(2+) is bound by residues D321 and D325. The DDXXD motif signature appears at 321–325 (DDAYD). Residues N463, T467, and E471 each contribute to the Mg(2+) site.

Belongs to the terpene synthase family. Tpsb subfamily. The cofactor is Mg(2+). Mn(2+) serves as cofactor.

It catalyses the reaction (2E,6E)-farnesyl diphosphate = (1S,5S,6R)-alpha-bergamotene + diphosphate. It carries out the reaction (2E,6E)-farnesyl diphosphate = (+)-alpha-santalene + diphosphate. The enzyme catalyses (2E,6E)-farnesyl diphosphate = (-)-beta-santalene + diphosphate. In terms of biological role, catalyzes a mixture of sesquiterpenoids from (2E,6E)-farnesyl diphosphate in fragrance biosynthesis. Catalyzes the formation of alpha-santalene, beta-santalene, epi-beta-santalene and exo-alpha-bergamotene, as well as traces of alpha-farnesene and beta-farnesene. The protein is Santalene synthase of Santalum austrocaledonicum (Sandalwood).